The chain runs to 725 residues: Protein ALEX (725 aa).

Disordered stretches follow at residues 1–93 (MSPS…ARAQ), 177–226 (GAIA…PLTD), 256–340 (EPPL…PSQP), 396–481 (PILT…SPLL), 508–528 (PMQVHWSGEPGHSQLLPPLGH), 584–624 (LPGL…AASS), and 638–675 (ATRSGATQSATSSPEPSEAASVYPSVPDHDPSAPGRPR). The segment covering 41–51 (HLRRKPCHSRH) has biased composition (basic residues). A compositionally biased stretch (polar residues) spans 260–276 (GSTTTPLSIWTAPQSQV). Composition is skewed to basic and acidic residues over residues 297–307 (QLSEKQPRWKE) and 314–326 (RWKEKSPLRREGT). Composition is skewed to pro residues over residues 423-442 (PSQPPRQSLPPRPSLPPGQP) and 459-473 (RSLPPGQPLSPPRSP). Low complexity-rich tracts occupy residues 584 to 598 (LPGLTSTSGAEAAAG) and 643 to 658 (ATQSATSSPEPSEAAS).

It belongs to the ALEX family. As to quaternary structure, interacts with the N-terminal region of the XLas isoforms of guanine nucleotide-binding protein G(s) subunit alpha.

The protein localises to the cell membrane. It localises to the cell projection. It is found in the ruffle. In terms of biological role, may inhibit the adenylyl cyclase-stimulating activity of guanine nucleotide-binding protein G(s) subunit alpha which is produced from the same locus in a different open reading frame. The protein is Protein ALEX of Mus musculus (Mouse).